Consider the following 285-residue polypeptide: Golgi phosphoprotein 3-like (285 aa).

Positions methionine 1–lysine 42 are disordered. Residues arginine 10–lysine 42 show a composition bias toward basic and acidic residues. A 1,2-diacyl-sn-glycero-3-phospho-(1D-myo-inositol 4-phosphate)-binding residues include tryptophan 67 and arginine 76. Serine 112 carries the post-translational modification Phosphoserine. 2 residues coordinate a 1,2-diacyl-sn-glycero-3-phospho-(1D-myo-inositol 4-phosphate): arginine 157 and arginine 160. A beta-hairpin required for oligomerization region spans residues glutamate 176–threonine 187.

It belongs to the GOLPH3/VPS74 family. In terms of assembly, homooligomer. Does not interact MYO18; differs from GOLPH3 by its inability to interact with MYO18. May interact with ARF1.

It localises to the golgi apparatus. Its subcellular location is the golgi stack membrane. It is found in the trans-Golgi network membrane. Its function is as follows. Phosphatidylinositol-4-phosphate-binding protein that may antagonize the action of GOLPH3 which is required for the process of vesicle budding at the Golgi and anterograde transport to the plasma membrane. In Homo sapiens (Human), this protein is Golgi phosphoprotein 3-like (GOLPH3L).